Consider the following 226-residue polypeptide: Lipoprotein-releasing system ATP-binding protein LolD (226 aa).

One can recognise an ABC transporter domain in the interval 5 to 226 (LRCEKISKFY…MADGVLREAS (222 aa)). 41–48 (GSSGSGKS) serves as a coordination point for ATP.

Belongs to the ABC transporter superfamily. Lipoprotein translocase (TC 3.A.1.125) family. The complex is composed of two ATP-binding proteins (LolD) and two transmembrane proteins (LolC and LolE).

The protein localises to the cell inner membrane. Part of the ABC transporter complex LolCDE involved in the translocation of mature outer membrane-directed lipoproteins, from the inner membrane to the periplasmic chaperone, LolA. Responsible for the formation of the LolA-lipoprotein complex in an ATP-dependent manner. The polypeptide is Lipoprotein-releasing system ATP-binding protein LolD (Haemophilus ducreyi (strain 35000HP / ATCC 700724)).